Consider the following 1342-residue polypeptide: DNA-directed RNA polymerase subunit beta (1342 aa).

This sequence belongs to the RNA polymerase beta chain family. The RNAP catalytic core consists of 2 alpha, 1 beta, 1 beta' and 1 omega subunit. When a sigma factor is associated with the core the holoenzyme is formed, which can initiate transcription.

It carries out the reaction RNA(n) + a ribonucleoside 5'-triphosphate = RNA(n+1) + diphosphate. DNA-dependent RNA polymerase catalyzes the transcription of DNA into RNA using the four ribonucleoside triphosphates as substrates. The chain is DNA-directed RNA polymerase subunit beta from Vibrio campbellii (strain ATCC BAA-1116).